The sequence spans 141 residues: Large ribosomal subunit protein uL16 (141 aa).

The segment at 1–20 (MLMPKRTKYRKQQKGRNRGK) is disordered.

The protein belongs to the universal ribosomal protein uL16 family. In terms of assembly, part of the 50S ribosomal subunit.

In terms of biological role, binds 23S rRNA and is also seen to make contacts with the A and possibly P site tRNAs. In Nautilia profundicola (strain ATCC BAA-1463 / DSM 18972 / AmH), this protein is Large ribosomal subunit protein uL16.